The chain runs to 220 residues: Inner membrane-spanning protein YciB (220 aa).

6 helical membrane passes run 20 to 40 (EVPP…FFFA), 57 to 77 (IGAP…IALA), 86 to 106 (LPIM…LTLW), 123 to 143 (LFGA…GYVF), 156 to 176 (KLTL…EVVW), and 187 to 207 (FKVW…MPLI).

It belongs to the YciB family.

It is found in the cell inner membrane. Plays a role in cell envelope biogenesis, maintenance of cell envelope integrity and membrane homeostasis. This Brucella anthropi (strain ATCC 49188 / DSM 6882 / CCUG 24695 / JCM 21032 / LMG 3331 / NBRC 15819 / NCTC 12168 / Alc 37) (Ochrobactrum anthropi) protein is Inner membrane-spanning protein YciB.